The following is a 327-amino-acid chain: Tagatose 1,6-diphosphate aldolase 2 (327 aa).

This sequence belongs to the aldolase LacD family.

The enzyme catalyses D-tagatofuranose 1,6-bisphosphate = D-glyceraldehyde 3-phosphate + dihydroxyacetone phosphate. It participates in carbohydrate metabolism; D-tagatose 6-phosphate degradation; D-glyceraldehyde 3-phosphate and glycerone phosphate from D-tagatose 6-phosphate: step 2/2. In Streptococcus pyogenes serotype M6 (strain ATCC BAA-946 / MGAS10394), this protein is Tagatose 1,6-diphosphate aldolase 2.